Consider the following 140-residue polypeptide: Cysteine desulfuration protein SufE (140 aa).

Catalysis depends on Cys-51, which acts as the Cysteine persulfide intermediate.

The protein belongs to the SufE family. Homodimer. Interacts with SufS.

The protein resides in the cytoplasm. Its pathway is cofactor biosynthesis; iron-sulfur cluster biosynthesis. Functionally, participates in cysteine desulfuration mediated by SufS. Cysteine desulfuration mobilizes sulfur from L-cysteine to yield L-alanine and constitutes an essential step in sulfur metabolism for biosynthesis of a variety of sulfur-containing biomolecules. Functions as a sulfur acceptor for SufS, by mediating the direct transfer of the sulfur atom from the S-sulfanylcysteine of SufS, an intermediate product of cysteine desulfuration process. The polypeptide is Cysteine desulfuration protein SufE (Yersinia enterocolitica serotype O:8 / biotype 1B (strain NCTC 13174 / 8081)).